The following is a 429-amino-acid chain: ATP-sensitive inward rectifier potassium channel 12 (429 aa).

The Cytoplasmic segment spans residues 1 to 76 (MTAGRVNPYS…IADMFTTCVD (76 aa)). Residues 77-103 (IRWRYMLLLFSLAFLVSWLLFGLIFWL) traverse the membrane as a helical segment. R78 and R80 together coordinate a 1,2-diacyl-sn-glycero-3-phospho-(1D-myo-inositol-4,5-bisphosphate). At 104-129 (IALIHGDLENPGGDDTFKPCVLQVNG) the chain is on the extracellular side. Residues C123 and C155 are joined by a disulfide bond. The helical; Pore-forming intramembrane region spans 130–146 (FVAAFLFSIETQTTIGY). T143, I144, G145, and Y146 together coordinate K(+). Residues 143 to 148 (TIGYGF) carry the Selectivity filter motif. Over 147-155 (GFRCVTEEC) the chain is Extracellular. Residues 156 to 183 (PLAVFMVVVQSIVGCIIDSFMIGAIMAK) traverse the membrane as a helical segment. Residues K183 and K188 each coordinate a 1,2-diacyl-sn-glycero-3-phospho-(1D-myo-inositol-4,5-bisphosphate). The Cytoplasmic segment spans residues 184–429 (MARPKKRAQT…QRSYRRESEI (246 aa)). The tract at residues 386-407 (RDEDEEDDDSRGLDDLSPDNRH) is disordered. Over residues 395–407 (SRGLDDLSPDNRH) the composition is skewed to basic and acidic residues.

The protein belongs to the inward rectifier-type potassium channel family. As to quaternary structure, homotetramer.

It localises to the membrane. Its subcellular location is the cell membrane. It is found in the sarcolemma. The protein localises to the T-tubule. The enzyme catalyses K(+)(in) = K(+)(out). With respect to regulation, activated by phosphatidylinositol 4,5-bisphosphate (PtdIns(4,5)P2). PtdIns(4,5)P2 binding to the cytoplasmic side of the channel triggers a conformation change leading to channel opening. Its function is as follows. Inward rectifying potassium channel that probably participates in controlling the resting membrane potential in electrically excitable cells. Probably participates in establishing action potential waveform and excitability of neuronal and muscle tissues. Inward rectifier potassium channels are characterized by a greater tendency to allow potassium to flow into the cell rather than out of it. Their voltage dependence is regulated by the concentration of extracellular potassium; as external potassium is raised, the voltage range of the channel opening shifts to more positive voltages. The inward rectification is mainly due to the blockage of outward current by internal magnesium. This Gallus gallus (Chicken) protein is ATP-sensitive inward rectifier potassium channel 12 (KCNJ12).